The chain runs to 165 residues: MPPKFDPNEIKVVYLRCTGGEVGATSALAPKIGPLGLSPKKVGDDIAKATGDWKGLRITVKLTIQNRQAQIEVVPSASALIIKALKEPPRDRKKQKNIKHSGNITFDEIVNIARQMRHRSLARELSGTIKEILGTAQSVGCNVDGRHPHDIIDDINSGAVECPAS.

Ser38 is subject to Phosphoserine. A Glycyl lysine isopeptide (Lys-Gly) (interchain with G-Cter in SUMO2) cross-link involves residue Lys40. Lys48 is covalently cross-linked (Glycyl lysine isopeptide (Lys-Gly) (interchain with G-Cter in ubiquitin)). Lys54 carries the N6-acetyllysine modification. Lys83 participates in a covalent cross-link: Glycyl lysine isopeptide (Lys-Gly) (interchain with G-Cter in ubiquitin). Ser165 is subject to Phosphoserine.

Belongs to the universal ribosomal protein uL11 family. As to quaternary structure, component of the large ribosomal subunit. Mature ribosomes consist of a small (40S) and a large (60S) subunit. The 40S subunit contains about 33 different proteins and 1 molecule of RNA (18S). The 60S subunit contains about 49 different proteins and 3 molecules of RNA (28S, 5.8S and 5S). Post-translationally, ubiquitinated at Lys-48 and Lys-83 by RNF14 and RNF25 in response to ribosome collisions (ribosome stalling).

The protein localises to the cytoplasm. Its function is as follows. Component of the large ribosomal subunit. The ribosome is a large ribonucleoprotein complex responsible for the synthesis of proteins in the cell. Binds directly to 26S ribosomal RNA. The polypeptide is Large ribosomal subunit protein uL11 (RPL12) (Bos taurus (Bovine)).